A 251-amino-acid polypeptide reads, in one-letter code: Ubiquinone/menaquinone biosynthesis C-methyltransferase UbiE (251 aa).

S-adenosyl-L-methionine contacts are provided by residues T74, D95, 123 to 124, and S140; that span reads NA.

This sequence belongs to the class I-like SAM-binding methyltransferase superfamily. MenG/UbiE family.

The enzyme catalyses a 2-demethylmenaquinol + S-adenosyl-L-methionine = a menaquinol + S-adenosyl-L-homocysteine + H(+). The catalysed reaction is a 2-methoxy-6-(all-trans-polyprenyl)benzene-1,4-diol + S-adenosyl-L-methionine = a 5-methoxy-2-methyl-3-(all-trans-polyprenyl)benzene-1,4-diol + S-adenosyl-L-homocysteine + H(+). It participates in quinol/quinone metabolism; menaquinone biosynthesis; menaquinol from 1,4-dihydroxy-2-naphthoate: step 2/2. The protein operates within cofactor biosynthesis; ubiquinone biosynthesis. Methyltransferase required for the conversion of demethylmenaquinol (DMKH2) to menaquinol (MKH2) and the conversion of 2-polyprenyl-6-methoxy-1,4-benzoquinol (DDMQH2) to 2-polyprenyl-3-methyl-6-methoxy-1,4-benzoquinol (DMQH2). This chain is Ubiquinone/menaquinone biosynthesis C-methyltransferase UbiE, found in Photorhabdus laumondii subsp. laumondii (strain DSM 15139 / CIP 105565 / TT01) (Photorhabdus luminescens subsp. laumondii).